The chain runs to 825 residues: Putative NAD(+)--arginine ADP-ribosyltransferase Mav (825 aa).

Residues 435 to 673 (ALKGLKKPPG…SGSDHHLPLH (239 aa)) form a disordered region. Pro residues-rich tracts occupy residues 443–457 (PGVP…PAAP) and 468–491 (SGKP…PLPH). The span at 560–579 (PAADTPAPSAPAASMSAASG) shows a compositional bias: low complexity. Positions 580 to 589 (PPMPPTPSLP) are enriched in pro residues. A compositionally biased stretch (low complexity) spans 590-599 (EPASLPSGPS). The region spanning 650-825 (KNANGHGPHD…GRTIIEMIER (176 aa)) is the TR mART core domain. Residues 656-670 (GPHDASLDSGSDHHL) show a composition bias toward basic and acidic residues. Residues 687-699 (TGPG…FALR), 730-733 (RGTN), and glutamate 750 each bind NAD(+). The active site involves arginine 730. Residues serine 755 and glutamate 795 contribute to the active site. Glutamate 795 provides a ligand contact to NAD(+).

This sequence belongs to the Arg-specific ADP-ribosyltransferase family.

It is found in the secreted. It catalyses the reaction L-arginyl-[protein] + NAD(+) = N(omega)-(ADP-D-ribosyl)-L-arginyl-[protein] + nicotinamide + H(+). Its function is as follows. A probable mono(ADP-ribosyl)transferase, it may ADP-ribosylate Arg in target protein(s). The sequence is that of Putative NAD(+)--arginine ADP-ribosyltransferase Mav from Mycobacterium avium (strain 104).